A 479-amino-acid chain; its full sequence is tRNA modification GTPase MnmE (479 aa).

(6S)-5-formyl-5,6,7,8-tetrahydrofolate-binding residues include Arg-25, Glu-82, and Lys-134. One can recognise a TrmE-type G domain in the interval 230-401; it reads GLRVVIAGQP…LRAALLARAG (172 aa). Residue Asn-240 participates in K(+) binding. Residues 240-245, 259-265, 284-287, 352-355, and 382-384 contribute to the GTP site; these read NAGKSS, TPIPGTT, DTAG, NKAD, and SAR. Ser-244 is a binding site for Mg(2+). Thr-259, Ile-261, and Thr-264 together coordinate K(+). Thr-265 lines the Mg(2+) pocket. A (6S)-5-formyl-5,6,7,8-tetrahydrofolate-binding site is contributed by Lys-479.

This sequence belongs to the TRAFAC class TrmE-Era-EngA-EngB-Septin-like GTPase superfamily. TrmE GTPase family. In terms of assembly, homodimer. Heterotetramer of two MnmE and two MnmG subunits. Requires K(+) as cofactor.

The protein resides in the cytoplasm. Exhibits a very high intrinsic GTPase hydrolysis rate. Involved in the addition of a carboxymethylaminomethyl (cmnm) group at the wobble position (U34) of certain tRNAs, forming tRNA-cmnm(5)s(2)U34. In Leptothrix cholodnii (strain ATCC 51168 / LMG 8142 / SP-6) (Leptothrix discophora (strain SP-6)), this protein is tRNA modification GTPase MnmE.